The chain runs to 456 residues: Acyl-CoA transferase FPSE_08120 (456 aa).

The N-terminal 33 residues, methionine 1–alanine 33, are a transit peptide targeting the mitochondrion.

Belongs to the CoA-transferase III family.

It is found in the mitochondrion. Its function is as follows. Acyl-CoA transferase; part of the Fusarium detoxification of benzoxazolinone cluster involved in the degradation of benzoxazolinones produced by the host plant. Maize, wheat, and rye produce the 2 benzoxazinone phytoanticipins 2,4-dihy-droxy-7-methoxy-1,4-benzoxazin-3-one (DIMBOA) and 2,4-dihydroxy-1,4-benzoxazin-3-one (DIBOA) that, due to their inherent instability once released, spontaneously degrade to the more stable corresponding benzoxazolinones, 6-methoxy-2-benzoxazolinone (MBOA) and 2-benzoxazolinone (BOA), respectively. The first step in the detoxification of benzoxazolinones involves the hydrolysis of the cyclic ester bond of benzoxazolinones by the gamma-lactamase FDB1 to aminophenols. FDB1 is able to convert 2-benzoxazolinone (BOA) into 2-aminophenol (2-AP), as well as 6-methoxy-2-benzoxazolinone (MBOA) into 5-methoxy-2-aminophenol (2-AMP). The N-malonyltransferase FDB2 then metabolizes aminophenols via N-malonylation to non-toxic malonamic acids. FDB2 converts 2-AP into N-(2-hydroxyphenyl) malonamic acid (HPMA) and 2-AMP into N-(2-hydroxy-4-methoxyphenyl) malonamic acid (HMPMA). The cluster also contains 2 transcription factors (FDB3 and FPSE_08121), an aldo-keto reductase (FPSE_08125) that possibly associates with a ketone component of BOA and MBOA degradation, an esterase (FPSE_08126), an acyl-CoA transferase (FPSE_08120), a solute carrier protein (FPSE_08119) and a transmembrane transporter (FPSE_08127) proposed to shuttle metabolites of benzoxazolinone degradation. This Fusarium pseudograminearum (strain CS3096) (Wheat and barley crown-rot fungus) protein is Acyl-CoA transferase FPSE_08120.